Reading from the N-terminus, the 309-residue chain is PI-PLC X domain-containing protein 1 (309 aa).

The region spanning 17-193 (HMWDIPLWNL…QVILSYDDES (177 aa)) is the PI-PLC X-box domain.

The sequence is that of PI-PLC X domain-containing protein 1 (plcxd1) from Danio rerio (Zebrafish).